We begin with the raw amino-acid sequence, 361 residues long: PTI1-like tyrosine-protein kinase 1 (361 aa).

Residues 16–43 (EEQQLKSSQQQSDANHKNSKPAPVAKHE) are disordered. A Protein kinase domain is found at 68–350 (FGSKALIGEG…IVVKALQPLL (283 aa)). ATP-binding positions include 74 to 82 (IGEGSYGRV) and Lys96. The Proton acceptor role is filled by Asp200.

Belongs to the protein kinase superfamily. Tyr protein kinase family. In terms of assembly, interacts with OXI1. Autophosphorylated and phosphorylated by OXI1.

It is found in the cell membrane. It catalyses the reaction L-tyrosyl-[protein] + ATP = O-phospho-L-tyrosyl-[protein] + ADP + H(+). The polypeptide is PTI1-like tyrosine-protein kinase 1 (PTI11) (Arabidopsis thaliana (Mouse-ear cress)).